Reading from the N-terminus, the 266-residue chain is Translation initiation factor 2 subunit alpha (266 aa).

In terms of domain architecture, S1 motif spans 12-83 (GEILIATVKQ…RKGTVDVSLK (72 aa)).

The protein belongs to the eIF-2-alpha family. Heterotrimer composed of an alpha, a beta and a gamma chain.

Functionally, eIF-2 functions in the early steps of protein synthesis by forming a ternary complex with GTP and initiator tRNA. This is Translation initiation factor 2 subunit alpha from Saccharolobus solfataricus (strain ATCC 35092 / DSM 1617 / JCM 11322 / P2) (Sulfolobus solfataricus).